The sequence spans 290 residues: Probable endonuclease 4 (290 aa).

Residues histidine 66, histidine 106, glutamate 143, aspartate 179, histidine 182, histidine 216, aspartate 229, histidine 231, and glutamate 261 each coordinate Zn(2+).

Belongs to the AP endonuclease 2 family. Zn(2+) serves as cofactor.

It catalyses the reaction Endonucleolytic cleavage to 5'-phosphooligonucleotide end-products.. Its function is as follows. Endonuclease IV plays a role in DNA repair. It cleaves phosphodiester bonds at apurinic or apyrimidinic (AP) sites, generating a 3'-hydroxyl group and a 5'-terminal sugar phosphate. This is Probable endonuclease 4 from Solibacter usitatus (strain Ellin6076).